The chain runs to 211 residues: MTQNLLDQFGTPKTRVKNAISALRYGHGIIVLDNEDRENEGDLIFSGETMTTEQMALTIRYGSGIVCLCITESKRKQLKLPMMVQNNTSKFGTNFTVTIEAAEGISTGVSAKDRLTTIRAAINDNAKPSDLNRPGHIFPLQAHKNGILGRIGHTEAAIEFVTLAGFKPAGIICELTNRNGTMSKVPDIIKFSKLKKMTIVTIRDLIQYISR.

D-ribulose 5-phosphate is bound by residues 37 to 38, Asp-42, 150 to 154, and Glu-174; these read RE and RIGHT. Glu-38 contributes to the Mg(2+) binding site. His-153 serves as a coordination point for Mg(2+).

The protein belongs to the DHBP synthase family. Homodimer. It depends on Mg(2+) as a cofactor. Mn(2+) is required as a cofactor.

The catalysed reaction is D-ribulose 5-phosphate = (2S)-2-hydroxy-3-oxobutyl phosphate + formate + H(+). The protein operates within cofactor biosynthesis; riboflavin biosynthesis; 2-hydroxy-3-oxobutyl phosphate from D-ribulose 5-phosphate: step 1/1. Its function is as follows. Catalyzes the conversion of D-ribulose 5-phosphate to formate and 3,4-dihydroxy-2-butanone 4-phosphate. The sequence is that of 3,4-dihydroxy-2-butanone 4-phosphate synthase from Buchnera aphidicola subsp. Baizongia pistaciae (strain Bp).